The chain runs to 473 residues: MKNLYSLRRFYHVETLFNGSLVVGGRDQESTGFAWWAGNARLINLSGKLLGAHVAHAGLIVFWAGAMNLFEVAHFVPEKPMYEQGLILLPHLATLGYGVGPGGEVIDTYPYFVSGVLHLISSAVLGFGGVYHSLVGPETLEESFPFFGYVWKDKNKMTTILGIHLIVLGFGAWLLVWKAMYFGGIYDTWAPGGGDVRIISNPTVSPGVIFSYILKSPFGGDGWIVSVDNMEDVIGGHIWIGTLCIFGGIWHILTKPWAWARRAFVWSGEAYLSYSLGAIALMGFTACCMSWFNTTAYPSEFYGPTGPEASQSQTFTFLVRDQRLGANVASAQGPTGLGKYLMRSPTGEIIFGGETMRFWDFRGPWLEPLRGPNGLDLNKLKNDIQPWQERRAAEYMTHAPLGSLNSVGGVATEINAVNYVSPRSWLATSHFCLGFFFFVGHLWHAGRARAAAAGFEKGIDRDNEPVLSMRPLD.

A propeptide spanning residues 1-14 (MKNLYSLRRFYHVE) is cleaved from the precursor. Position 15 is an N-acetylthreonine (Thr15). Thr15 is subject to Phosphothreonine. 5 helical membrane passes run 69 to 93 (LFEV…PHLA), 134 to 155 (LVGP…KDKN), 178 to 200 (KAMY…RIIS), 255 to 275 (KPWA…LSYS), and 291 to 312 (WFNT…ASQS). Residue Glu367 participates in [CaMn4O5] cluster binding. The helical transmembrane segment at 447-471 (RARAAAAGFEKGIDRDNEPVLSMRP) threads the bilayer.

Belongs to the PsbB/PsbC family. PsbC subfamily. PSII is composed of 1 copy each of membrane proteins PsbA, PsbB, PsbC, PsbD, PsbE, PsbF, PsbH, PsbI, PsbJ, PsbK, PsbL, PsbM, PsbT, PsbX, PsbY, PsbZ, Psb30/Ycf12, at least 3 peripheral proteins of the oxygen-evolving complex and a large number of cofactors. It forms dimeric complexes. Requires Binds multiple chlorophylls and provides some of the ligands for the Ca-4Mn-5O cluster of the oxygen-evolving complex. It may also provide a ligand for a Cl- that is required for oxygen evolution. PSII binds additional chlorophylls, carotenoids and specific lipids. as cofactor.

The protein resides in the plastid. It localises to the chloroplast thylakoid membrane. Functionally, one of the components of the core complex of photosystem II (PSII). It binds chlorophyll and helps catalyze the primary light-induced photochemical processes of PSII. PSII is a light-driven water:plastoquinone oxidoreductase, using light energy to abstract electrons from H(2)O, generating O(2) and a proton gradient subsequently used for ATP formation. The chain is Photosystem II CP43 reaction center protein from Chlorella vulgaris (Green alga).